A 692-amino-acid polypeptide reads, in one-letter code: Elongation factor G (692 aa).

Residues 8–282 (ENTRNIGIMA…AVIDYLPSPL (275 aa)) enclose the tr-type G domain. GTP-binding positions include 17–24 (AHIDAGKT), 81–85 (DTPGH), and 135–138 (NKMD).

This sequence belongs to the TRAFAC class translation factor GTPase superfamily. Classic translation factor GTPase family. EF-G/EF-2 subfamily.

It is found in the cytoplasm. Catalyzes the GTP-dependent ribosomal translocation step during translation elongation. During this step, the ribosome changes from the pre-translocational (PRE) to the post-translocational (POST) state as the newly formed A-site-bound peptidyl-tRNA and P-site-bound deacylated tRNA move to the P and E sites, respectively. Catalyzes the coordinated movement of the two tRNA molecules, the mRNA and conformational changes in the ribosome. This chain is Elongation factor G, found in Bacillus cereus (strain AH820).